The sequence spans 491 residues: MRIEISSDNPLEHATPALVVGCFEDERGRVFEECDAALGGCLGRLAETREFTGKAGTTRLLHTLGKLPAERLLLVGLGKKADLTHERLRQAAGHAMQALRTSRAASFASTLPLASSLPRATESVAIGSLLGSYSFDLYKTKDKEQRFAFEEMTLMAPQPEREMARAVAEQAEQICRGVQLARDLVSHPGNVVTPGYLAQAARELAARHALEVRVYEQDELESLGMNALLGVGKGAAEPPRLIVLRYRGEGAKGRPVVLVGKGITFDSGGISIKPGPGMEEMKTDMAGAAAVFGTLEAAALLRLPVDLIGVVPTTENMPDGKAFKPGDVLASLSGTTIEITNTDAEGRLILCDALHFAQKFKPAAMIDLATLTGACVVALGHEASAVLGNDQRLVDALKKSGDETGERLWQLPLWDEYGEGMKSDIADIKNAGSRDGGTIKAAWFLKQFVGETRWAHLDIAGTAWSEKARPYSPKGATGVGVRLLIEYLRRK.

2 residues coordinate Mn(2+): K261 and D266. K273 is a catalytic residue. Residues D284, D343, and E345 each contribute to the Mn(2+) site. The active site involves R347.

It belongs to the peptidase M17 family. Requires Mn(2+) as cofactor.

It localises to the cytoplasm. The catalysed reaction is Release of an N-terminal amino acid, Xaa-|-Yaa-, in which Xaa is preferably Leu, but may be other amino acids including Pro although not Arg or Lys, and Yaa may be Pro. Amino acid amides and methyl esters are also readily hydrolyzed, but rates on arylamides are exceedingly low.. The enzyme catalyses Release of an N-terminal amino acid, preferentially leucine, but not glutamic or aspartic acids.. Functionally, presumably involved in the processing and regular turnover of intracellular proteins. Catalyzes the removal of unsubstituted N-terminal amino acids from various peptides. The sequence is that of Probable cytosol aminopeptidase from Geobacter sp. (strain M21).